We begin with the raw amino-acid sequence, 920 residues long: DNA topoisomerase 4 subunit A (920 aa).

The region spanning 37–509 (LPDVRDGLKP…MPAKIEPLPV (473 aa)) is the Topo IIA-type catalytic domain. Tyr125 functions as the O-(5'-phospho-DNA)-tyrosine intermediate in the catalytic mechanism. A disordered region spans residues 499–566 (GMPAKIEPLP…PEAKQDDLNL (68 aa)). A compositionally biased stretch (acidic residues) spans 528-540 (PEEELDSPGEPEQ).

Belongs to the type II topoisomerase GyrA/ParC subunit family. As to quaternary structure, heterotetramer composed of ParC and ParE.

Its subcellular location is the cell membrane. The enzyme catalyses ATP-dependent breakage, passage and rejoining of double-stranded DNA.. Functionally, topoisomerase IV is essential for chromosome segregation. It relaxes supercoiled DNA. Performs the decatenation events required during the replication of a circular DNA molecule. In Synechocystis sp. (strain ATCC 27184 / PCC 6803 / Kazusa), this protein is DNA topoisomerase 4 subunit A (parC).